A 311-amino-acid chain; its full sequence is NAD kinase (311 aa).

Asp-89 (proton acceptor) is an active-site residue. NAD(+) contacts are provided by residues 89–90 (DG), Arg-94, 163–164 (NE), Asp-193, and 204–209 (TAYAFS).

The protein belongs to the NAD kinase family. It depends on a divalent metal cation as a cofactor.

The protein resides in the cytoplasm. The catalysed reaction is NAD(+) + ATP = ADP + NADP(+) + H(+). Its function is as follows. Involved in the regulation of the intracellular balance of NAD and NADP, and is a key enzyme in the biosynthesis of NADP. Catalyzes specifically the phosphorylation on 2'-hydroxyl of the adenosine moiety of NAD to yield NADP. The polypeptide is NAD kinase (Mycobacterium leprae (strain Br4923)).